A 77-amino-acid polypeptide reads, in one-letter code: NAD(P)H-quinone oxidoreductase subunit L (77 aa).

Helical transmembrane passes span 12–32 (LIAY…LLFY) and 47–67 (LGIY…SPFL).

Belongs to the complex I NdhL subunit family. In terms of assembly, NDH-1 can be composed of about 15 different subunits; different subcomplexes with different compositions have been identified which probably have different functions.

It localises to the cellular thylakoid membrane. It catalyses the reaction a plastoquinone + NADH + (n+1) H(+)(in) = a plastoquinol + NAD(+) + n H(+)(out). It carries out the reaction a plastoquinone + NADPH + (n+1) H(+)(in) = a plastoquinol + NADP(+) + n H(+)(out). Functionally, NDH-1 shuttles electrons from an unknown electron donor, via FMN and iron-sulfur (Fe-S) centers, to quinones in the respiratory and/or the photosynthetic chain. The immediate electron acceptor for the enzyme in this species is believed to be plastoquinone. Couples the redox reaction to proton translocation, and thus conserves the redox energy in a proton gradient. Cyanobacterial NDH-1 also plays a role in inorganic carbon-concentration. This is NAD(P)H-quinone oxidoreductase subunit L from Prochlorococcus marinus (strain MIT 9301).